A 407-amino-acid polypeptide reads, in one-letter code: Growth/differentiation factor 11 (407 aa).

An N-terminal signal peptide occupies residues 1 to 24; the sequence is MVLAAPLLLGFLLLALELRPRGEA. The propeptide occupies 25–298; that stretch reads AEGPAAAAAA…VLENTKRSRR (274 aa). Asn-94 carries an N-linked (GlcNAc...) asparagine glycan. 4 disulfide bridges follow: Cys-304–Cys-314, Cys-313–Cys-372, Cys-341–Cys-404, and Cys-345–Cys-406.

Belongs to the TGF-beta family. In terms of assembly, homodimer; disulfide-linked. Interacts directly with ACVR2B. Interacts directly with ACVR2A. Interacts with ACVR1B, TGFBR1 and ACVR1C in an ACVR2B-dependent manner. Interacts with FST isoform 2/FS-288. Synthesized as large precursor molecule that undergoes proteolytic cleavage by furin-like proteases. This produces an inactive form consisting of the mature C-terminal portion non-covalently bound to its cleaved N-terminal propeptide. Activation of the mature form requires additional cleavage of the propeptide by a tolloid-like metalloproteinase. In the embryo, strong expression is seen in the palatal epithelia, including the medial edge epithelial and midline epithelial seam of the palatal shelves. Less pronounced expression is also seen throughout the palatal shelf and tongue mesenchyme.

Its subcellular location is the secreted. Its function is as follows. Secreted signal that acts globally to regulate anterior/posterior axial patterning during development. May play critical roles in patterning both mesodermal and neural tissues. It is required for proper vertebral patterning and orofacial development. Signals through activin receptors type-2, ACVR2A and ACVR2B, and activin receptors type-1, ACVR1B, ACVR1C and TGFBR1 leading to the phosphorylation of SMAD2 and SMAD3. The protein is Growth/differentiation factor 11 (GDF11) of Homo sapiens (Human).